A 441-amino-acid polypeptide reads, in one-letter code: Amino-acid acetyltransferase (441 aa).

The 140-residue stretch at 295 to 434 folds into the N-acetyltransferase domain; sequence EQVRRATIND…QALYNYQRRS (140 aa).

It belongs to the acetyltransferase family. ArgA subfamily. Homohexamer.

It is found in the cytoplasm. The enzyme catalyses L-glutamate + acetyl-CoA = N-acetyl-L-glutamate + CoA + H(+). Its pathway is amino-acid biosynthesis; L-arginine biosynthesis; N(2)-acetyl-L-ornithine from L-glutamate: step 1/4. The sequence is that of Amino-acid acetyltransferase from Pectobacterium carotovorum subsp. carotovorum (strain PC1).